A 1836-amino-acid chain; its full sequence is InaD-like protein (1836 aa).

Residues 1 to 65 (MPENPAAEKM…SIKQLKGQLS (65 aa)) enclose the L27 domain. 3 PDZ domains span residues 134–221 (YIDI…AREV), 248–328 (DVEL…ARDP), and 365–453 (NVEL…VRRK). Ser455, Ser459, and Ser482 each carry phosphoserine. The span at 456-466 (LSASPFEQPSS) shows a compositional bias: polar residues. Positions 456-492 (LSASPFEQPSSREAVAEPPEVPELTGSLKPETNSRME) are disordered. The PDZ 4 domain maps to 555–641 (DEELQKYSKL…PFTLVCCRRL (87 aa)). Ser647 is modified (phosphoserine). PDZ domains are found at residues 687 to 773 (TVEL…ICKP) and 1074 to 1166 (PRIV…VVQS). Polar residues predominate over residues 1173–1191 (VIPSVNNKGKTPPQNQDQN). Residues 1173 to 1232 (VIPSVNNKGKTPPQNQDQNTQEKKAKRHGTAPPPMKLPPPYRAPSADTEESEEDSALTDK) are disordered. Positions 1203–1214 (APPPMKLPPPYR) are enriched in pro residues. Residue Ser1217 is modified to Phosphoserine. Acidic residues predominate over residues 1219-1228 (DTEESEEDSA). A PDZ 7 domain is found at 1245-1328 (LHIIELEKDK…PTRVKLVFIR (84 aa)). The tract at residues 1341–1448 (FPVPSHSPSP…ADVTGSGNFQ (108 aa)) is disordered. Residues 1372-1383 (PLPERESSKPED) show a composition bias toward basic and acidic residues. 2 stretches are compositionally biased toward polar residues: residues 1415 to 1426 (YSAQVSSSSQEI) and 1434 to 1448 (CQST…GNFQ). PDZ domains lie at 1472 to 1555 (EMII…VIYR) and 1568 to 1650 (VFLV…EIGR). Thr1545 carries the phosphothreonine modification. Residues 1657–1678 (ASSRKTSQNSQGDQHSAHSSCR) form a disordered region. The PDZ 10 domain occupies 1709–1795 (PRTVEIIREL…FGRIILQVVA (87 aa)). The disordered stretch occupies residues 1813 to 1836 (SQLGSPTADRHPQDPEELLQRTAD).

Forms a ternary complex with PALS1 and CRB1. Component of a complex whose core is composed of ARHGAP17, AMOT, PALS1, INADL/PATJ and PARD3/PAR3. Forms a heterotrimeric complex composed of MMP5, LIN7B and PATJ; the N-terminal L27 domain of PALS1 interacts with the L27 domain of PATJ and the C-terminal L27 domain of PALS1 interacts with the L27 domain of LIN7B. Component of a complex composed of CRB3, PALS1 and PATJ. As part of the Crumbs complex; interacts with WWP1, the interaction is enhanced by AMOTL2 and facilitates WWP1 localization to the plasma membrane. The Crumbs complex promotes monoubiquitination of AMOTL2 by WWP1, which activates the Hippo signaling pathway. Interacts (via N-terminus) with PALS1/PALS (via PDZ domain). Interacts with TJP3/ZO-3 and CLDN1/claudin-1. Interacts with ASIC3, KCNJ10, KCNJ15, GRIN2A, GRIN2B, GRIN2C, GRIN2D, NLGN2, and HTR2A. Interacts with MPP7. Directly interacts with HTR4. Interacts (via PDZ domain 8) with WWC1 (via the ADDV motif). Interacts with SLC6A4. Interacts (via C-terminus) with ARHGEF18. Interacts with NPHP1. Interacts with PARD3/PAR3. Interacts (via PDZ1-6 domains) with TJP1/ZO1; the interaction is required for attachment and extension of TJP1/ZO1 condensates along the apical cell interface. Abundantly expressed in germ cells, also expressed in testes and seminiferous tubules, with faint expression in Sertoli cells (at protein level).

The protein localises to the cell junction. It localises to the tight junction. Its subcellular location is the apical cell membrane. It is found in the cytoplasm. The protein resides in the perinuclear region. Its function is as follows. Scaffolding protein that facilitates the localization of proteins to the cell membrane. Required for the correct formation of tight junctions and epithelial apico-basal polarity. Acts (via its L27 domain) as an apical connector and elongation factor for multistranded TJP1/ZO1 condensates that form a tight junction belt, thereby required for the formation of the tight junction-mediated cell barrier. Positively regulates epithelial cell microtubule elongation and cell migration, possibly via facilitating localization of PRKCI/aPKC and PAR3D/PAR3 at the leading edge of migrating cells. Plays a role in the correct reorientation of the microtubule-organizing center during epithelial migration. May regulate the surface expression and/or function of ASIC3 in sensory neurons. May recruit ARHGEF18 to apical cell-cell boundaries. This is InaD-like protein from Rattus norvegicus (Rat).